A 616-amino-acid chain; its full sequence is Chaperone protein DnaK (616 aa).

T174 bears the Phosphothreonine; by autocatalysis mark. Residues 575-616 (QQTQGAQSDPGAAGFGGQQEAPGAGQDENVVDADYKVVDDDK) are disordered. Over residues 607-616 (ADYKVVDDDK) the composition is skewed to basic and acidic residues.

The protein belongs to the heat shock protein 70 family.

Functionally, acts as a chaperone. This is Chaperone protein DnaK from Ruminiclostridium cellulolyticum (strain ATCC 35319 / DSM 5812 / JCM 6584 / H10) (Clostridium cellulolyticum).